A 629-amino-acid polypeptide reads, in one-letter code: UvrABC system protein C (629 aa).

Residues 12-91 form the GIY-YIG domain; sequence DRPGCYLFKD…IKKHKPKYNI (80 aa). Residues 200 to 235 form the UVR domain; that stretch reads QEVLERLRARMEQAAERLEFERAAELRDQIRAIEKV.

Belongs to the UvrC family. In terms of assembly, interacts with UvrB in an incision complex.

Its subcellular location is the cytoplasm. Functionally, the UvrABC repair system catalyzes the recognition and processing of DNA lesions. UvrC both incises the 5' and 3' sides of the lesion. The N-terminal half is responsible for the 3' incision and the C-terminal half is responsible for the 5' incision. This chain is UvrABC system protein C, found in Symbiobacterium thermophilum (strain DSM 24528 / JCM 14929 / IAM 14863 / T).